Reading from the N-terminus, the 118-residue chain is Large ribosomal subunit protein bL19 (118 aa).

The protein belongs to the bacterial ribosomal protein bL19 family.

Functionally, this protein is located at the 30S-50S ribosomal subunit interface and may play a role in the structure and function of the aminoacyl-tRNA binding site. The chain is Large ribosomal subunit protein bL19 from Dictyoglomus thermophilum (strain ATCC 35947 / DSM 3960 / H-6-12).